Consider the following 179-residue polypeptide: Shikimate kinase (179 aa).

An ATP-binding site is contributed by 14 to 19 (GAGKTT). Thr-18 lines the Mg(2+) pocket. Asp-36, Arg-60, and Gly-82 together coordinate substrate. Arg-120 lines the ATP pocket. Arg-139 contacts substrate.

The protein belongs to the shikimate kinase family. Monomer. It depends on Mg(2+) as a cofactor.

The protein resides in the cytoplasm. The catalysed reaction is shikimate + ATP = 3-phosphoshikimate + ADP + H(+). It participates in metabolic intermediate biosynthesis; chorismate biosynthesis; chorismate from D-erythrose 4-phosphate and phosphoenolpyruvate: step 5/7. Catalyzes the specific phosphorylation of the 3-hydroxyl group of shikimic acid using ATP as a cosubstrate. The protein is Shikimate kinase of Methylococcus capsulatus (strain ATCC 33009 / NCIMB 11132 / Bath).